The primary structure comprises 609 residues: Pogo transposable element with KRAB domain (609 aa).

Disordered regions lie at residues 1 to 28 and 100 to 127; these read MEST…ELED and EGEE…SDVK. Residues 8–28 adopt a coiled-coil conformation; that stretch reads LNLSLKEEEEEEEIQSRELED. K13 is covalently cross-linked (Glycyl lysine isopeptide (Lys-Gly) (interchain with G-Cter in SUMO2)). The KRAB domain maps to 47-118; sequence ALFDEVAIYF…DEWQLQGGTS (72 aa). Positions 108–119 are enriched in polar residues; that stretch reads SDEWQLQGGTSA. One can recognise an HTH CENPB-type domain in the interval 250 to 323; it reads AFRGPKNGRF…MRRYDLSLRH (74 aa). The DDE-1 domain maps to 353–567; sequence HDYEVAQMGN…ISSESIVQGF (215 aa). Residue K384 forms a Glycyl lysine isopeptide (Lys-Gly) (interchain with G-Cter in SUMO2) linkage. Residues 588–609 are disordered; sequence SELPGGGEPPKDCDTESMAESN.

It localises to the nucleus. The chain is Pogo transposable element with KRAB domain (POGK) from Homo sapiens (Human).